Consider the following 188-residue polypeptide: Cell division protein SepF (188 aa).

The segment covering 152–162 (TSHDEASTPTV) has biased composition (polar residues). A disordered region spans residues 152–188 (TSHDEASTPTVVSRDAEAEQQQEAAAAPSPAWGATAL).

It belongs to the SepF family. Homodimer. Interacts with FtsZ.

The protein localises to the cytoplasm. In terms of biological role, cell division protein that is part of the divisome complex and is recruited early to the Z-ring. Probably stimulates Z-ring formation, perhaps through the cross-linking of FtsZ protofilaments. Its function overlaps with FtsA. The protein is Cell division protein SepF of Parasynechococcus marenigrum (strain WH8102).